Reading from the N-terminus, the 501-residue chain is Ribulose bisphosphate carboxylase large chain (501 aa).

Substrate-binding residues include Asn-141 and Thr-191. The active-site Proton acceptor is Lys-193. Lys-195 serves as a coordination point for substrate. Mg(2+)-binding residues include Lys-219, Asp-221, and Glu-222. Lys-219 is modified (N6-carboxylysine). Residue His-311 is the Proton acceptor of the active site. Substrate contacts are provided by Arg-312, His-344, and Ser-396.

The protein belongs to the RuBisCO large chain family. Type I subfamily. In terms of assembly, heterohexadecamer of 8 large chains and 8 small chains. Mg(2+) serves as cofactor.

It catalyses the reaction 2 (2R)-3-phosphoglycerate + 2 H(+) = D-ribulose 1,5-bisphosphate + CO2 + H2O. The catalysed reaction is D-ribulose 1,5-bisphosphate + O2 = 2-phosphoglycolate + (2R)-3-phosphoglycerate + 2 H(+). In terms of biological role, ruBisCO catalyzes two reactions: the carboxylation of D-ribulose 1,5-bisphosphate, the primary event in carbon dioxide fixation, as well as the oxidative fragmentation of the pentose substrate. Both reactions occur simultaneously and in competition at the same active site. In Paraburkholderia phymatum (strain DSM 17167 / CIP 108236 / LMG 21445 / STM815) (Burkholderia phymatum), this protein is Ribulose bisphosphate carboxylase large chain.